We begin with the raw amino-acid sequence, 182 residues long: UPF0397 protein BCAH820_2657 (182 aa).

The next 5 membrane-spanning stretches (helical) occupy residues 9 to 29, 40 to 60, 71 to 91, 114 to 134, and 142 to 162; these read VVAI…GFTI, AILT…IGLI, WGIW…MGFI, ITGL…DIIV, and IVIQ…VLGL.

Belongs to the UPF0397 family.

The protein resides in the cell membrane. The protein is UPF0397 protein BCAH820_2657 of Bacillus cereus (strain AH820).